A 65-amino-acid polypeptide reads, in one-letter code: Metallothionein (65 aa).

This sequence belongs to the metallothionein superfamily. Type 4 family.

Its function is as follows. Metallothioneins have a high content of cysteine residues that bind various heavy metals. The protein is Metallothionein of Paracentrotus lividus (Common sea urchin).